The primary structure comprises 192 residues: Mitochondrial import inner membrane translocase subunit Tim22 (192 aa).

Cystine bridges form between C67–C139 and C158–C177. Transmembrane regions (helical) follow at residues 72-92 (VLAC…TAGI), 123-141 (YAKN…ECLV), and 168-188 (AGVK…AAID).

It belongs to the Tim17/Tim22/Tim23 family. Component of the TIM22 complex, whose core is composed of TIMM22, associated with peripheral protein FXC1/TIMM10B and the 70 kDa heterohexamer. In most cases, the 70 kDa complex is composed of TIMM9 and TIMM10 (TIMM10A or TIMM10B). A small fraction of the 70 kDa complex is composed of TIMM8 (TIMM8A/DDP1 or TIMM8B/DDP2) and TIMM13. The TIM22 complex also contains AGK and TIMM29. Interacts directly with TIMM9, TIMM10A and FXC1/TIMM10B. Interacts (when oxidized) with TIMM29; interaction is direct. In terms of processing, disulfide bonds promote efficient assembly of the TIM22 complex.

The protein localises to the mitochondrion inner membrane. Functionally, essential core component of the TIM22 complex, a complex that mediates the import and insertion of multi-pass transmembrane proteins into the mitochondrial inner membrane. In the TIM22 complex, it constitutes the voltage-activated and signal-gated channel. Forms a twin-pore translocase that uses the membrane potential as external driving force in 2 voltage-dependent steps. The polypeptide is Mitochondrial import inner membrane translocase subunit Tim22 (Timm22) (Rattus norvegicus (Rat)).